The chain runs to 337 residues: DNA-directed RNA polymerase subunit alpha (337 aa).

Residues Met-1–Glu-233 are alpha N-terminal domain (alpha-NTD). An alpha C-terminal domain (alpha-CTD) region spans residues Asn-264 to Phe-337.

It belongs to the RNA polymerase alpha chain family. As to quaternary structure, in plastids the minimal PEP RNA polymerase catalytic core is composed of four subunits: alpha, beta, beta', and beta''. When a (nuclear-encoded) sigma factor is associated with the core the holoenzyme is formed, which can initiate transcription.

It localises to the plastid. It is found in the chloroplast. It carries out the reaction RNA(n) + a ribonucleoside 5'-triphosphate = RNA(n+1) + diphosphate. Its function is as follows. DNA-dependent RNA polymerase catalyzes the transcription of DNA into RNA using the four ribonucleoside triphosphates as substrates. This is DNA-directed RNA polymerase subunit alpha from Atropa belladonna (Belladonna).